Here is a 347-residue protein sequence, read N- to C-terminus: D-alanine--D-alanine ligase (347 aa).

The ATP-grasp domain occupies 134–332; it reads KLYAKDLGVK…LAQSLPKTPK (199 aa). 161–216 contacts ATP; that stretch reads LMNFNFPFIIKPNNAGSSLGVNVVKEEKELVYALDGAFEYSKEVLIEPFIQGVKEY. Aspartate 288, glutamate 300, and asparagine 302 together coordinate Mg(2+).

The protein belongs to the D-alanine--D-alanine ligase family. Mg(2+) is required as a cofactor. It depends on Mn(2+) as a cofactor.

Its subcellular location is the cytoplasm. It carries out the reaction 2 D-alanine + ATP = D-alanyl-D-alanine + ADP + phosphate + H(+). It functions in the pathway cell wall biogenesis; peptidoglycan biosynthesis. Its function is as follows. Cell wall formation. In Helicobacter pylori (strain ATCC 700392 / 26695) (Campylobacter pylori), this protein is D-alanine--D-alanine ligase.